Reading from the N-terminus, the 536-residue chain is CUGBP Elav-like family member 2 (536 aa).

RRM domains follow at residues 58 to 141 (IKMF…PADS), 150 to 230 (RKLF…FADT), and 451 to 529 (ANLF…LKRS).

This sequence belongs to the CELF/BRUNOL family.

The protein resides in the nucleus. It is found in the cytoplasm. Its function is as follows. RNA-binding protein implicated in the regulation of several post-transcriptional events. May be involved in pre-mRNA alternative splicing, mRNA translation repression and stability. This Xenopus laevis (African clawed frog) protein is CUGBP Elav-like family member 2 (celf2).